The chain runs to 215 residues: Golgi-associated RAB2 interactor protein 5A (215 aa).

2 disordered regions span residues 1-20 (MKRG…AGPG) and 174-215 (QDYS…LWGL). Positions 178–191 (ALEDDEDDDEDEDR) are enriched in acidic residues.

This sequence belongs to the GARIN family. As to quaternary structure, interacts (via N-terminus) with RAB2B (in GTP-bound form).

The protein resides in the golgi apparatus. RAB2B effector protein which promotes cytosolic DNA-induced innate immune responses. Regulates IFN responses against DNA viruses by regulating the CGAS-STING signaling axis. This Bos taurus (Bovine) protein is Golgi-associated RAB2 interactor protein 5A (GARIN5A).